We begin with the raw amino-acid sequence, 341 residues long: MIEFKNVNKVFRKKRETIQALKNVSFKIDQHDIFGVIGYSGAGKSTLVRLVNQLETVSDGQVIVDGHEIDTYKEKDLRDIKKDIGMIFQHFNLLNSKSVYKNVAMPLILSKTNKKEIKEKVDEMLEFVGLADKKDQFPDELSGGQKQRVAIARALVTHPKILLCDEATSALDPATTSSILNLLSNVNRTFGVTIMMITHEMSVIQKICHRVAVMENGEVIEMGTVKDVFSHPQTNTAKNFVSTVINTEPSKELRASFNSRKDSNFTDYKLFLDSEQIQLPILNELINEHHLNVNVLFSSMSEIQDETVCYLWLRFEHDESFNDFKLTDYLSKRHIRYEEVI.

Positions 2–241 constitute an ABC transporter domain; that stretch reads IEFKNVNKVF…PQTNTAKNFV (240 aa). ATP is bound at residue 38 to 45; it reads GYSGAGKS.

Belongs to the ABC transporter superfamily. Methionine importer (TC 3.A.1.24) family. In terms of assembly, the complex is composed of two ATP-binding proteins (MetN), two transmembrane proteins (MetI) and a solute-binding protein (MetQ).

The protein localises to the cell membrane. It carries out the reaction L-methionine(out) + ATP + H2O = L-methionine(in) + ADP + phosphate + H(+). It catalyses the reaction D-methionine(out) + ATP + H2O = D-methionine(in) + ADP + phosphate + H(+). Part of the ABC transporter complex MetNIQ involved in methionine import. Responsible for energy coupling to the transport system. This Staphylococcus epidermidis (strain ATCC 35984 / DSM 28319 / BCRC 17069 / CCUG 31568 / BM 3577 / RP62A) protein is Methionine import ATP-binding protein MetN 1.